The chain runs to 338 residues: Nucleoid-associated protein VSAL_I1059 (338 aa).

A disordered region spans residues 319 to 338 (KGTPPNLKDQLTRRLGSSES).

Belongs to the YejK family.

The protein resides in the cytoplasm. It localises to the nucleoid. The sequence is that of Nucleoid-associated protein VSAL_I1059 from Aliivibrio salmonicida (strain LFI1238) (Vibrio salmonicida (strain LFI1238)).